A 145-amino-acid polypeptide reads, in one-letter code: Superoxide dismutase [Cu-Zn] (145 aa).

Positions 37, 39, and 54 each coordinate Cu cation. Cysteine 48 and cysteine 137 form a disulfide bridge. 4 residues coordinate Zn(2+): histidine 54, histidine 62, histidine 71, and aspartate 74. Histidine 111 provides a ligand contact to Cu cation.

It belongs to the Cu-Zn superoxide dismutase family. In terms of assembly, homodimer. It depends on Cu cation as a cofactor. Requires Zn(2+) as cofactor.

It localises to the cytoplasm. It catalyses the reaction 2 superoxide + 2 H(+) = H2O2 + O2. Destroys radicals which are normally produced within the cells and which are toxic to biological systems. This Drosophila busckii (Fruit fly) protein is Superoxide dismutase [Cu-Zn].